The chain runs to 161 residues: Cystatin cpi-2 (161 aa).

Residues 1 to 25 (MMSTMSIKEGLLVILLSLFLFDTTA) form the signal peptide. An Important for interaction with host LGMN motif is present at residues 76–78 (SND). The N-linked (GlcNAc...) asparagine glycan is linked to asparagine 89. The Secondary area of contact motif lies at 93 to 97 (QVVAG). A disulfide bridge links cysteine 111 with cysteine 124.

This sequence belongs to the cystatin family.

In terms of biological role, cysteine protease inhibitor which inhibits members of the peptidase C1 family. Also acts as an asparaginyl endopeptidase inhibitor. In the human host, inhibits CTSL/cathepsin L, CTSS/cathepsin S, CTSB/cathepsin B and asparaginyl endopeptidase LGMN/AEP which may cause defects in both antigen and MHC class II invariant chain CD74/Ii processing. In Brugia malayi (Filarial nematode worm), this protein is Cystatin cpi-2.